Reading from the N-terminus, the 772-residue chain is Angiomotin-like protein 2 (772 aa).

3 disordered regions span residues 41–158 (GGAG…HVRS), 170–239 (RNGA…SPHF), and 260–299 (QYQYLPQPQEHSPPLHPAALGHGPPSSFGPPAVEGPPSAQ). 3 stretches are compositionally biased toward basic and acidic residues: residues 80–91 (QGGETHLAENRL), 100–112 (KGEELPTYEEAKA), and 142–153 (RRQDEALRELRH). The required for interaction with CDH5 stretch occupies residues 101 to 303 (GEELPTYEEA…GPPSAQATLG (203 aa)). The residue at position 107 (Tyr107) is a Phosphotyrosine; by FGFR1. Residues 178 to 191 (HMSSSHSFPQLARS) are compositionally biased toward polar residues. The segment covering 197-214 (PRGPPAEGPEPRGPPPQY) has biased composition (pro residues). The required for interaction with CDH1 stretch occupies residues 221-303 (QETAAVTDPR…GPPSAQATLG (83 aa)). Residues 305-578 (AHLAQMETVL…KYLEERAMRQ (274 aa)) are a coiled coil. Glycyl lysine isopeptide (Lys-Gly) (interchain with G-Cter in ubiquitin) cross-links involve residues Lys343 and Lys404. 2 disordered regions span residues 596-615 (IRHSPQPSPSSSFNEGLLPG) and 680-752 (GLVS…RTPS). The segment covering 686–699 (RQTDARPAGDRVPA) has biased composition (basic and acidic residues). Positions 718–733 (DGSTQTDGPADNTSAC) are enriched in polar residues. Phosphoserine occurs at positions 752 and 755. Residues 769–772 (EILI) carry the PDZ-binding motif.

The protein belongs to the angiomotin family. Part of a complex composed of AMOTL2, MAGI1 and CDH5, within the complex AMOTL2 acts as a scaffold protein for the interaction of MAGI1 with CDH5. The complex is required for coupling actin fibers to cell junctions in endothelial cells. Within the complex AMOTL2 (via its N-terminus) interacts with CDH5. Interacts (via N-terminus) with MAGI1. Interacts (via N-terminus) with ACTB; the interaction facilitates binding of cell junction complexes to actin fibers in endothelial cells. Interacts with CDH1; the interaction may facilitate binding of radial actin fibers to cell junction complexes. Interacts with SRC. Interacts with YAP1; the interaction is required for ubiquitination of AMOTL2 and localization of YAP1 to tight junctions. Interacts with WWP1; the interaction facilitates WWP1 interaction with the Crumbs complex and subsequent WWP1 translocation to the plasma membrane. WWP1 interaction with the Crumbs complex promotes WWP1 monoubiquitination of AMOTL2 which subsequently activates the Hippo signaling pathway. When ubiquitinated interacts with LATS2 (via UBA domain); the interaction promotes LATS2 phosphorylation of YAP1. Interacts (via PPXY motif) with WWTR1/TAZ (via WW domain); the interaction promotes WWTR1/TAZ localization to the cytoplasm and thereby inhibition of its transcriptional properties. Interacts with PHLDB2; interaction may facilitate PHLDB2 localization to the myotube podosome cortex that surrounds the core. In terms of processing, phosphorylation at Tyr-107 is necessary for efficient binding to SRC and synergistically functioning with SRC to activate the downstream MAPK pathway. Post-translationally, monoubiquitinated at Lys-343 and Lys-404 by Crumbs complex-bound WWP1. De-ubiquitinated at Lys-343 and Lys-404 by USP9X; the interaction may be promoted by cell contact inhibition. Deubiquitination of AMOTL2 negatively regulates Hippo signaling activation. As to expression, expressed in skeletal muscle at neuromuscular junctions (at protein level).

It is found in the recycling endosome. The protein localises to the cytoplasm. The protein resides in the cell projection. It localises to the podosome. Its subcellular location is the cell junction. In terms of biological role, regulates the translocation of phosphorylated SRC to peripheral cell-matrix adhesion sites. Required for proper architecture of actin filaments. Plays a role in coupling actin fibers to cell junctions in endothelial cells and is therefore required for correct endothelial cell morphology via facilitating transcellular transmission of mechanical force resulting in endothelial cell elongation. Required for the anchoring of radial actin fibers to CDH1 junction complexes at the cell membrane which facilitates organization of radial actin fiber structure and cellular response to contractile forces. This contributes to maintenance of cell area, size, shape, epithelial sheet organization and trophectoderm cell properties that facilitate blastocyst zona hatching. Inhibits the Wnt/beta-catenin signaling pathway, probably by recruiting CTNNB1 to recycling endosomes and hence preventing its translocation to the nucleus. Participates in angiogenesis. Activates the Hippo signaling pathway in response to cell contact inhibition via interaction with and ubiquitination by Crumbs complex-bound WWP1. Ubiquitinated AMOTL2 then interacts with LATS2 which in turn phosphorylates YAP1, excluding it from the nucleus and localizing it to the cytoplasm and tight junctions, therefore ultimately repressing YAP1-driven transcription of target genes. Acts to inhibit WWTR1/TAZ transcriptional coactivator activity via sequestering WWTR1/TAZ in the cytoplasm and at tight junctions. Regulates the size and protein composition of the podosome cortex and core at myofibril neuromuscular junctions. Selectively promotes FGF-induced MAPK activation through SRC. May play a role in the polarity, proliferation and migration of endothelial cells. This is Angiomotin-like protein 2 from Mus musculus (Mouse).